We begin with the raw amino-acid sequence, 139 residues long: D-ribose pyranase (139 aa).

Residue His20 is the Proton donor of the active site. Substrate-binding positions include Asp28, His106, and 128 to 130 (YAN).

It belongs to the RbsD / FucU family. RbsD subfamily. In terms of assembly, homodecamer.

Its subcellular location is the cytoplasm. It catalyses the reaction beta-D-ribopyranose = beta-D-ribofuranose. It functions in the pathway carbohydrate metabolism; D-ribose degradation; D-ribose 5-phosphate from beta-D-ribopyranose: step 1/2. Functionally, catalyzes the interconversion of beta-pyran and beta-furan forms of D-ribose. This chain is D-ribose pyranase, found in Actinobacillus pleuropneumoniae serotype 5b (strain L20).